The sequence spans 302 residues: tRNA-cytidine(32) 2-sulfurtransferase (302 aa).

Positions Ser-45–Ser-50 match the PP-loop motif motif. [4Fe-4S] cluster contacts are provided by Cys-120, Cys-123, and Cys-211.

Belongs to the TtcA family. Homodimer. Mg(2+) is required as a cofactor. [4Fe-4S] cluster serves as cofactor.

It localises to the cytoplasm. The enzyme catalyses cytidine(32) in tRNA + S-sulfanyl-L-cysteinyl-[cysteine desulfurase] + AH2 + ATP = 2-thiocytidine(32) in tRNA + L-cysteinyl-[cysteine desulfurase] + A + AMP + diphosphate + H(+). It participates in tRNA modification. In terms of biological role, catalyzes the ATP-dependent 2-thiolation of cytidine in position 32 of tRNA, to form 2-thiocytidine (s(2)C32). The sulfur atoms are provided by the cysteine/cysteine desulfurase (IscS) system. The protein is tRNA-cytidine(32) 2-sulfurtransferase of Cellvibrio japonicus (strain Ueda107) (Pseudomonas fluorescens subsp. cellulosa).